We begin with the raw amino-acid sequence, 235 residues long: 7-carboxy-7-deazaguanine synthase (235 aa).

Substrate is bound by residues 25-27 (IQG) and Arg-40. The Radical SAM core domain occupies 31–235 (FTGTYSVFVR…PRLHLLVQLP (205 aa)). Residues Cys-44, Cys-48, and Cys-51 each contribute to the [4Fe-4S] cluster site. Mg(2+) is bound at residue Thr-53. Thr-85 lines the substrate pocket. Residues Gly-87 and 135 to 137 (SPK) each bind S-adenosyl-L-methionine. A substrate-binding site is contributed by Pro-235.

This sequence belongs to the radical SAM superfamily. 7-carboxy-7-deazaguanine synthase family. Homodimer. Requires [4Fe-4S] cluster as cofactor. S-adenosyl-L-methionine is required as a cofactor. It depends on Mg(2+) as a cofactor.

The enzyme catalyses 6-carboxy-5,6,7,8-tetrahydropterin + H(+) = 7-carboxy-7-deazaguanine + NH4(+). It functions in the pathway purine metabolism; 7-cyano-7-deazaguanine biosynthesis. Its function is as follows. Catalyzes the complex heterocyclic radical-mediated conversion of 6-carboxy-5,6,7,8-tetrahydropterin (CPH4) to 7-carboxy-7-deazaguanine (CDG), a step common to the biosynthetic pathways of all 7-deazapurine-containing compounds. This Hyperthermus butylicus (strain DSM 5456 / JCM 9403 / PLM1-5) protein is 7-carboxy-7-deazaguanine synthase.